Here is a 220-residue protein sequence, read N- to C-terminus: MRQLTPHEARVLATLMEKARTVPDSYPLSLNTLVLGCNQKTSRDPVMDLTEAQAQAAIDTLKKQSLVFEASSSRVPRFEHNFQRGFGVSEPQAVLLGLLMLRGPQTPGELRLNSERWYKFADIASVEDALAELKARGDDSGALMVVQLARTAGMREQRWAHLLCGESLLMPYQQAGSGDAAINPETEPVSLGQAERLQQRIDALERQVAHLYKELGLSQA.

This sequence belongs to the UPF0502 family.

In Polaromonas naphthalenivorans (strain CJ2), this protein is UPF0502 protein Pnap_3223.